The following is a 244-amino-acid chain: Aliphatic sulfonates import ATP-binding protein SsuB 2 (244 aa).

The ABC transporter domain occupies 13–229; sequence VQVRSLVRGF…ALGDSKFHEF (217 aa). Residue 45 to 52 participates in ATP binding; it reads GKSGSGKS.

This sequence belongs to the ABC transporter superfamily. Aliphatic sulfonates importer (TC 3.A.1.17.2) family. As to quaternary structure, the complex is composed of two ATP-binding proteins (SsuB), two transmembrane proteins (SsuC) and a solute-binding protein (SsuA).

The protein localises to the cell membrane. It carries out the reaction ATP + H2O + aliphatic sulfonate-[sulfonate-binding protein]Side 1 = ADP + phosphate + aliphatic sulfonateSide 2 + [sulfonate-binding protein]Side 1.. Its function is as follows. Part of the ABC transporter complex SsuABC involved in aliphatic sulfonates import. Responsible for energy coupling to the transport system. This is Aliphatic sulfonates import ATP-binding protein SsuB 2 from Rhodococcus jostii (strain RHA1).